We begin with the raw amino-acid sequence, 257 residues long: Pimeloyl-[acyl-carrier protein] methyl ester esterase (257 aa).

In terms of domain architecture, AB hydrolase-1 spans 15–241 (HLVLLHGWGL…KAAHAPFVSH (227 aa)). Residues W22, 82 to 83 (SL), and 143 to 147 (FLALQ) each bind substrate. The active-site Nucleophile is the S82. Residues D207 and H235 contribute to the active site. H235 lines the substrate pocket.

Belongs to the AB hydrolase superfamily. Carboxylesterase BioH family. In terms of assembly, monomer.

It localises to the cytoplasm. It catalyses the reaction 6-carboxyhexanoyl-[ACP] methyl ester + H2O = 6-carboxyhexanoyl-[ACP] + methanol + H(+). Its pathway is cofactor biosynthesis; biotin biosynthesis. In terms of biological role, the physiological role of BioH is to remove the methyl group introduced by BioC when the pimeloyl moiety is complete. It allows to synthesize pimeloyl-ACP via the fatty acid synthetic pathway through the hydrolysis of the ester bonds of pimeloyl-ACP esters. The chain is Pimeloyl-[acyl-carrier protein] methyl ester esterase from Klebsiella pneumoniae subsp. pneumoniae (strain ATCC 700721 / MGH 78578).